Reading from the N-terminus, the 360-residue chain is Phosphoserine aminotransferase (360 aa).

Arg-41 lines the L-glutamate pocket. Pyridoxal 5'-phosphate-binding residues include Trp-101, Thr-152, Asp-172, and Gln-195. Residue Lys-196 is modified to N6-(pyridoxal phosphate)lysine. 237–238 (NT) provides a ligand contact to pyridoxal 5'-phosphate.

The protein belongs to the class-V pyridoxal-phosphate-dependent aminotransferase family. SerC subfamily. As to quaternary structure, homodimer. Pyridoxal 5'-phosphate serves as cofactor.

Its subcellular location is the cytoplasm. The catalysed reaction is O-phospho-L-serine + 2-oxoglutarate = 3-phosphooxypyruvate + L-glutamate. It catalyses the reaction 4-(phosphooxy)-L-threonine + 2-oxoglutarate = (R)-3-hydroxy-2-oxo-4-phosphooxybutanoate + L-glutamate. It functions in the pathway amino-acid biosynthesis; L-serine biosynthesis; L-serine from 3-phospho-D-glycerate: step 2/3. The protein operates within cofactor biosynthesis; pyridoxine 5'-phosphate biosynthesis; pyridoxine 5'-phosphate from D-erythrose 4-phosphate: step 3/5. In terms of biological role, catalyzes the reversible conversion of 3-phosphohydroxypyruvate to phosphoserine and of 3-hydroxy-2-oxo-4-phosphonooxybutanoate to phosphohydroxythreonine. This is Phosphoserine aminotransferase from Burkholderia cenocepacia (strain ATCC BAA-245 / DSM 16553 / LMG 16656 / NCTC 13227 / J2315 / CF5610) (Burkholderia cepacia (strain J2315)).